The chain runs to 500 residues: MESSTTTSYSVVSELEGTLLKNPKPFAYFMLVAFEASGLIRFATLLFLWPIIALLDVLGYRNGSLKLMIFVATAGLHESEIESVARAVLPKFFMDDISMDAWRAFGSCDKRVVVTRMPRVMVERFAKDHLSADEVIGTEIVVNRFGYATGLIQETNVDQSVFNSVANLFVDRRPQLGLGRHIISDSPTFLSLCEEQVHAPVPSNYNGHNQRLHVQPLPVIFHDGRLVKLPTPATALIILLWIPFGIILAMIRIFVGFLLPLWAIPYVSRIFNTRFIVKGKPPAQATTGNPGVLFVCTHRTLMDPVVLSYVLGRSIPAVTYSISRLSEILSPIPTFRLTRIRDVDAEMIKKELSNGDLVVYPEGTTCREPFLLRFSALFAELTDNIVPVAMNYRVGFFHATTARGWKGLDPIFFFMNPRPVYEVTFLNQLEVEATCSSGKSPYDVANYVQRILAATLGFECTNFTRKDKYRVLAGNDGTVSYLSFLDQVKKVVTTFKPFLH.

Transmembrane regions (helical) follow at residues 38–58 (GLIRFATLLFLWPIIALLDVL) and 235–255 (ALIILLWIPFGIILAMIRIFV). The HXXXXD motif motif lies at 298 to 303 (HRTLMD).

It belongs to the GPAT/DAPAT family. Weakly or not expressed in roots, leaves, seedlings, developing siliques and flower buds.

It localises to the membrane. The catalysed reaction is sn-glycerol 3-phosphate + an acyl-CoA = a 1-acyl-sn-glycero-3-phosphate + CoA. It functions in the pathway phospholipid metabolism; CDP-diacylglycerol biosynthesis; CDP-diacylglycerol from sn-glycerol 3-phosphate: step 1/3. Esterifies acyl-group from acyl-ACP to the sn-1 position of glycerol-3-phosphate, an essential step in glycerolipid biosynthesis. The sequence is that of Glycerol-3-phosphate acyltransferase 7 (GPAT7) from Arabidopsis thaliana (Mouse-ear cress).